The chain runs to 82 residues: Putative membrane protein insertion efficiency factor (82 aa).

This sequence belongs to the UPF0161 family.

It is found in the cell inner membrane. Could be involved in insertion of integral membrane proteins into the membrane. The protein is Putative membrane protein insertion efficiency factor of Colwellia psychrerythraea (strain 34H / ATCC BAA-681) (Vibrio psychroerythus).